Consider the following 96-residue polypeptide: MAKYEILYIIRPNIEEEAKNALVARFDSILTDNGATVVESKTWEKRRLAYEIQDFREGLYHIVNVEANDDAALKEFDRLSKINADILRHMIVKIDA.

This sequence belongs to the bacterial ribosomal protein bS6 family.

Binds together with bS18 to 16S ribosomal RNA. The polypeptide is Small ribosomal subunit protein bS6 (Streptococcus pneumoniae serotype 2 (strain D39 / NCTC 7466)).